The sequence spans 304 residues: uncharacterized protein (304 aa).

A run of 9 helical transmembrane segments spans residues 9–29 (VFYV…SIHF), 67–87 (IILY…GNMF), 100–120 (AGSI…GIFF), 131–151 (EFYI…INSS), 159–179 (FFLG…QNLI), 189–209 (AVVI…CLAF), 222–242 (IGML…GMLM), 252–272 (ITVF…IGYL), and 278–298 (INIY…LALK). EamA domains are found at residues 13–148 (LLMG…IFVI) and 171–298 (FIQS…LALK).

Belongs to the EamA transporter family.

It localises to the cell membrane. This is an uncharacterized protein from Haemophilus influenzae (strain ATCC 51907 / DSM 11121 / KW20 / Rd).